The primary structure comprises 100 residues: Proline-rich protein 15-like protein (100 aa).

The interval 26 to 100 is disordered; sequence PDTYTQSEGG…LFDDREGKGQ (75 aa). The span at 53–62 shows a compositional bias: basic and acidic residues; the sequence is RLEKIVDKNT.

Belongs to the PRR15 family.

This chain is Proline-rich protein 15-like protein (PRR15L), found in Bos taurus (Bovine).